Reading from the N-terminus, the 360-residue chain is MLKFTQSYQFIQNNREGTALLAILALFALLGVIDRNYFNLQTFTMIFSSAQILILLAIGATMVMLTRNIDVSVGSITGLCAVTVGMALNAGFGLALSCLFALLVGMGAGFFNGILVTWLRIPAIVATLGTLGLYRGLMLLLTGGKWIEGLPADLKSLSTPILFSISPIGWLIMLLIVAMALLLGKTAFGRSFYATGDNLQGARQLGIRTDSIRIFAFSMNGVMAALAGIVFASQIGFIPNQTGSGLEMKAIAACVLGGISLLGGTGTIIGAILGAYLLTQIDSVLVLLRLPAWWNDFIAGLVLLGVLVFDGRLRCAVERNIRQQKYARFTTRPVAPDKKVKSNNNKAPSSKSFTKKEVVR.

A run of 9 helical transmembrane segments spans residues 18–38 (TALL…RNYF), 45–65 (MIFS…MVML), 76–96 (ITGL…GLAL), 99–119 (LFAL…VTWL), 121–141 (IPAI…MLLL), 161–181 (ILFS…AMAL), 219–239 (MNGV…GFIP), 255–275 (VLGG…ILGA), and 290–310 (LPAW…LVFD). Positions 334–360 (VAPDKKVKSNNNKAPSSKSFTKKEVVR) are disordered. The segment covering 342-352 (SNNNKAPSSKS) has biased composition (low complexity).

Belongs to the binding-protein-dependent transport system permease family. AraH/RbsC subfamily. In terms of assembly, the complex is composed of two ATP-binding proteins (LsrA), two transmembrane proteins (LsrC and LsrD) and a solute-binding protein (LsrB).

It localises to the cell inner membrane. In terms of biological role, part of the ABC transporter complex LsrABCD involved in autoinducer 2 (AI-2) import. Probably responsible for the translocation of the substrate across the membrane. This is Autoinducer 2 import system permease protein LsrC (lsrC) from Yersinia enterocolitica serotype O:8 / biotype 1B (strain NCTC 13174 / 8081).